The following is a 243-amino-acid chain: Triosephosphate isomerase (243 aa).

9-11 (NWK) provides a ligand contact to substrate. Residue His-96 is the Electrophile of the active site. The active-site Proton acceptor is Glu-165. Residues Gly-171, Ser-204, and 225 to 226 (GG) each bind substrate.

This sequence belongs to the triosephosphate isomerase family. Homodimer.

Its subcellular location is the cytoplasm. It carries out the reaction D-glyceraldehyde 3-phosphate = dihydroxyacetone phosphate. It participates in carbohydrate biosynthesis; gluconeogenesis. It functions in the pathway carbohydrate degradation; glycolysis; D-glyceraldehyde 3-phosphate from glycerone phosphate: step 1/1. In terms of biological role, involved in the gluconeogenesis. Catalyzes stereospecifically the conversion of dihydroxyacetone phosphate (DHAP) to D-glyceraldehyde-3-phosphate (G3P). The chain is Triosephosphate isomerase from Synechococcus sp. (strain CC9902).